The following is a 62-amino-acid chain: Sperm protamine P1 (62 aa).

The tract at residues 1–62 (MARYRRHSRS…RRYSRRRRRY (62 aa)) is disordered.

It belongs to the protamine P1 family. As to expression, testis.

Its subcellular location is the nucleus. The protein resides in the chromosome. Protamines substitute for histones in the chromatin of sperm during the haploid phase of spermatogenesis. They compact sperm DNA into a highly condensed, stable and inactive complex. The sequence is that of Sperm protamine P1 (PRM1) from Sminthopsis longicaudata (Long-tailed dunnart).